Reading from the N-terminus, the 122-residue chain is Large ribosomal subunit protein uL14c (122 aa).

Belongs to the universal ribosomal protein uL14 family. Part of the 50S ribosomal subunit.

The protein localises to the plastid. Its subcellular location is the chloroplast. Binds to 23S rRNA. In Oenothera biennis (German evening primrose), this protein is Large ribosomal subunit protein uL14c.